The following is a 226-amino-acid chain: MIPRPQPHSGRWRAGAARRLTSLVAAAFAAATLLLTPALAPPASAGCPDAEVVFARGTGEPPGLGRVGQAFVSSLRQQTNKSIGTYGVNYPANGDFLAAADGANDASDHIQQMASACRATRLVLGGYSQGAAVIDIVTAAPLPGLGFTQPLPPAADDHIAAIALFGNPSGRAGGLMSALTPQFGSKTINLCNNGDPICSDGNRWRAHLGYVPGMTNQAARFVASRI.

A signal peptide spans M1–A45. C47 and C117 form a disulfide bridge. Catalysis depends on S128, which acts as the Nucleophile. Residues C191 and C198 are joined by a disulfide bond. D195 is a catalytic residue. H207 (proton donor/acceptor) is an active-site residue.

Belongs to the cutinase family. As to quaternary structure, homodimer.

It localises to the cell membrane. The protein localises to the secreted. The protein resides in the cell wall. The enzyme catalyses 1,2-dihexadecanoyl-sn-glycero-3-phosphocholine + H2O = 1-hexadecanoyl-sn-glycero-3-phosphocholine + hexadecanoate + H(+). The catalysed reaction is a butanoate ester + H2O = an aliphatic alcohol + butanoate + H(+). With respect to regulation, inhibited by high concentrations of paraoxon. Inhibited by tetrahydrolipstatin (THL), a specific lipase inhibitor. Functionally, A2-type phospholipase, which is probably involved in the degradation of macrophage membrane. Hydrolyzes dipalmitoylphosphatidylcholine. Also shows moderate esterase activity and hydrolyzes the p-nitrophenol-linked aliphatic ester pNP-butyrate (C4). Does not exhibit cutinase activity. The sequence is that of Phospholipase Culp4 from Mycobacterium tuberculosis (strain ATCC 25618 / H37Rv).